The primary structure comprises 245 residues: Small ribosomal subunit protein uS2 (245 aa).

Belongs to the universal ribosomal protein uS2 family.

This is Small ribosomal subunit protein uS2 from Pseudomonas putida (strain GB-1).